Reading from the N-terminus, the 443-residue chain is D-inositol 3-phosphate glycosyltransferase (443 aa).

His26 provides a ligand contact to 1D-myo-inositol 3-phosphate. UDP-N-acetyl-alpha-D-glucosamine is bound by residues 32–33 (QP) and Gly40. Residues 37-42 (DAGGMN), Lys95, Tyr128, Thr152, and Arg172 contribute to the 1D-myo-inositol 3-phosphate site. Residues Arg246, Lys251, and Gln304 each contribute to the UDP-N-acetyl-alpha-D-glucosamine site. The Mg(2+) site is built by Tyr313, Arg314, and Ala316. Residues Glu326 and Glu334 each coordinate UDP-N-acetyl-alpha-D-glucosamine. Thr340 contacts Mg(2+).

It belongs to the glycosyltransferase group 1 family. MshA subfamily. Homodimer.

The enzyme catalyses 1D-myo-inositol 3-phosphate + UDP-N-acetyl-alpha-D-glucosamine = 1D-myo-inositol 2-acetamido-2-deoxy-alpha-D-glucopyranoside 3-phosphate + UDP + H(+). In terms of biological role, catalyzes the transfer of a N-acetyl-glucosamine moiety to 1D-myo-inositol 3-phosphate to produce 1D-myo-inositol 2-acetamido-2-deoxy-glucopyranoside 3-phosphate in the mycothiol biosynthesis pathway. This is D-inositol 3-phosphate glycosyltransferase from Mycobacteroides abscessus (strain ATCC 19977 / DSM 44196 / CCUG 20993 / CIP 104536 / JCM 13569 / NCTC 13031 / TMC 1543 / L948) (Mycobacterium abscessus).